The following is a 522-amino-acid chain: Sorting nexin-1 (522 aa).

Disordered regions lie at residues 1–89 and 115–142; these read MASG…QDLF and SLPP…QEDQ. 2 positions are modified to phosphoserine: serine 32 and serine 39. Residues 35 to 45 show a composition bias toward acidic residues; it reads EAGDSDTEGED. A phosphothreonine mark is found at threonine 41 and threonine 48. Residues serine 58 and serine 72 each carry the phosphoserine modification. The span at 60-73 shows a compositional bias: polar residues; sequence KRTTSLLPINNGSK. The segment covering 132 to 142 has biased composition (acidic residues); the sequence is EELEEEEQEDQ. Residues 143–272 enclose the PX domain; sequence FDLTVGITDP…EFLEKEELPR (130 aa). A 1,2-diacyl-sn-glycero-3-phospho-(1D-myo-inositol-3-phosphate) contacts are provided by arginine 186, serine 188, and lysine 214. Serine 188 bears the Phosphoserine mark. The residue at position 237 (lysine 237) is an N6-acetyllysine. Residue arginine 238 coordinates a 1,2-diacyl-sn-glycero-3-phospho-(1D-myo-inositol-3-phosphate). Position 280 is a phosphoserine (serine 280). The segment at 281–298 is membrane-binding amphipathic helix; it reads GAGLLKMFNKATDAVSKM. Residues 302-522 form the BAR domain; that stretch reads MNESDIWFEE…AFLPEAKAIS (221 aa).

It belongs to the sorting nexin family. As to quaternary structure, predominantly forms heterodimers with BAR domain-containing sorting nexins SNX5, SNX6 and SNX32; can self-associate to form homodimers. The heterodimers are proposed to self-assemble into helical arrays on the membrane to stabilize and expand local membrane curvature underlying endosomal tubule formation. Thought to be a component of the originally described retromer complex (also called SNX-BAR retromer) which is a pentamer containing the heterotrimeric retromer cargo-selective complex (CSC), also described as vacuolar protein sorting subcomplex (VPS) and a heterodimeric membrane-deforming subcomplex formed between SNX1 or SNX2 and SNX5 or SNX6 (also called SNX-BAR subcomplex); the respective CSC and SNX-BAR subcomplexes associate with low affinity. Interacts with SNX5, SNX6, SNX32, VPS26A, VPS29, VPS35, DRD5, DENND5A, KALRN, RHOG (GDP-bound form). The interaction with SNX2 is reported controversially. Interacts with DNAJC13; prevented by presence of HGS. Interacts with HGS.

It localises to the endosome membrane. The protein resides in the golgi apparatus. The protein localises to the trans-Golgi network membrane. Its subcellular location is the early endosome membrane. It is found in the cell projection. It localises to the lamellipodium. Functionally, involved in several stages of intracellular trafficking. Interacts with membranes containing phosphatidylinositol 3-phosphate (PtdIns(3P)) or phosphatidylinositol 3,5-bisphosphate (PtdIns(3,5)P2). Acts in part as component of the retromer membrane-deforming SNX-BAR subcomplex. The SNX-BAR retromer mediates retrograde transport of cargo proteins from endosomes to the trans-Golgi network (TGN) and is involved in endosome-to-plasma membrane transport for cargo protein recycling. The SNX-BAR subcomplex functions to deform the donor membrane into a tubular profile called endosome-to-TGN transport carrier (ETC). Can sense membrane curvature and has in vitro vesicle-to-membrane remodeling activity. Involved in retrograde endosome-to-TGN transport of lysosomal enzyme receptors (IGF2R, M6PR and SORT1). Plays a role in targeting ligand-activated EGFR to the lysosomes for degradation after endocytosis from the cell surface and release from the Golgi. Involvement in retromer-independent endocytic trafficking of P2RY1 and lysosomal degradation of protease-activated receptor-1/F2R. Promotes KALRN- and RHOG-dependent but retromer-independent membrane remodeling such as lamellipodium formation; the function is dependent on GEF activity of KALRN. Required for endocytosis of DRD5 upon agonist stimulation but not for basal receptor trafficking. The polypeptide is Sorting nexin-1 (SNX1) (Macaca fascicularis (Crab-eating macaque)).